The chain runs to 643 residues: E3 ubiquitin-protein ligase AMFR (643 aa).

Residues 39-67 (PEAGPGEPDQLTASLQPEPPAPARPSAGG) are disordered. The next 6 membrane-spanning stretches (helical) occupy residues 82–102 (LFVW…AKLI), 122–142 (FWNF…VQTV), 145–165 (VVMW…VQLC), 186–206 (VLSL…VCSI), 215–235 (TLAF…HVIL), and 276–296 (HIHM…VIFM). Residues 341–379 (CAICWDSMQAARKLPCGHLFHNSCLRSWLEQDTSCPTCR) form an RING-type zinc finger. A helical transmembrane segment spans residues 429–449 (IASWLPSFSVEVMHTTNILGI). Residues 456-498 (QLNAMAHQIQEMFPQVPYHLVLQDLQLTRSVEITTDNILEGRI) enclose the CUE domain. Disordered stretches follow at residues 504–579 (TQRS…DERQ) and 596–624 (RFLN…PVTL). A phosphoserine mark is found at Ser-516, Ser-523, and Ser-542. Residues 548-563 (TLDFGEVEVEPSEVED) are compositionally biased toward acidic residues. Basic and acidic residues predominate over residues 564–579 (FEARGSRFSKSADERQ). Residues 622–640 (VTLRRRMLAAAAERRLQKQ) form a VCP/p97-interacting motif (VIM) region.

In terms of assembly, interacts with RNF5. Also forms an ERAD complex containing VCP/p97, NGLY1; PSMC1; SAKS1 and RAD23B required for coupling retrotranslocation, ubiquitination and deglycosylation. Interacts with DERL1. Interacts (through a region distinct from the RING finger) with UBE2G2/UBC7. Component of the VCP/p97-AMFR/gp78 complex that enhances VCP/p97 binding to polyubiquitinated proteins for their degradation by the endoplasmic reticulum-associated degradation (ERAD) pathway. Interacts (via the VIM) with VCP/p97. Interacts (via its membrane domain) with INSIG1; the interaction initiates the sterol-mediated ubiquitination and degradation of HMGCR by the ERAD pathway. Interacts with AUP1, UBE2G2 and RNF139/TRC8; interaction with AUP1 facilitates interaction of AMFR with ubiquitin-conjugating enzyme UBE2G2 and ubiquitin ligase RNF139, leading to sterol-induced ubiquitination of HMGCR and its subsequent proteasomal degradation. Interacts with BAG6. Interacts with USP13 (via UBA 2 domain); the interaction is direct. Interacts with LMBR1L. Interacts with UBAC2 and CTNNB1. Interacts with C18orf32. (Microbial infection) Interacts with Staphylococcus aureus HIgB; this interaction regulates AMFR-mediated inflammation by promoting TAB3 ubiquitination to promote TAB3-TAK1 complex formation. Palmitoylation of the RING-type zing finger by ZDHHC6 promotes localization to the peripheral endoplasmic reticulum. In terms of tissue distribution, widely expressed.

It is found in the endoplasmic reticulum membrane. The enzyme catalyses [E2 ubiquitin-conjugating enzyme]-S-ubiquitinyl-L-cysteine + [acceptor protein]-L-cysteine = [E2 ubiquitin-conjugating enzyme]-L-cysteine + [acceptor protein]-S-ubiquitinyl-L-cysteine.. The protein operates within protein modification; protein ubiquitination. Functionally, E3 ubiquitin-protein ligase that mediates the polyubiquitination of lysine and cysteine residues on target proteins, such as CD3D, CYP3A4, CFTR, INSIG1, SOAT2/ACAT2 and APOB for proteasomal degradation. Component of a VCP/p97-AMFR/gp78 complex that participates in the final step of endoplasmic reticulum-associated degradation (ERAD). The VCP/p97-AMFR/gp78 complex is involved in the sterol-accelerated ERAD degradation of HMGCR through binding to the HMGCR-INSIG1 complex at the ER membrane. In addition, interaction of AMFR with AUP1 facilitates interaction of AMFR with ubiquitin-conjugating enzyme UBE2G2 and ubiquitin ligase RNF139, leading to sterol-induced HMGCR ubiquitination. The ubiquitinated HMGCR is then released from the ER into the cytosol for subsequent destruction. In addition to ubiquitination on lysine residues, catalyzes ubiquitination on cysteine residues: together with INSIG1, mediates polyubiquitination of SOAT2/ACAT2 at 'Cys-277', leading to its degradation when the lipid levels are low. Catalyzes ubiquitination and subsequent degradation of INSIG1 when cells are depleted of sterols. Mediates polyubiquitination of INSIG2 at 'Cys-215' in some tissues, leading to its degradation. Also regulates ERAD through the ubiquitination of UBL4A a component of the BAG6/BAT3 complex. Also acts as a scaffold protein to assemble a complex that couples ubiquitination, retranslocation and deglycosylation. Mediates tumor invasion and metastasis as a receptor for the GPI/autocrine motility factor. In association with LMBR1L and UBAC2, negatively regulates the canonical Wnt signaling pathway in the lymphocytes by promoting the ubiquitin-mediated degradation of CTNNB1 and Wnt receptors FZD6 and LRP6. Regulates NF-kappa-B and MAPK signaling pathways by mediating 'Lys-27'-linked polyubiquitination of TAB3 and promoting subsequent TAK1/MAP3K7 activation. Required for proper lipid homeostasis. In Homo sapiens (Human), this protein is E3 ubiquitin-protein ligase AMFR.